Here is a 265-residue protein sequence, read N- to C-terminus: Type 1 encapsulin shell protein (265 aa).

Belongs to the encapsulin family. Family 1 subfamily. As to quaternary structure, multimeric. The encapsulin nanocompartment is formed by 60 subunits. Monomers form pentamers which assemble to form shells. There are 12 pores where the pentamers meet as well as 3-fold axis channels and dimer channels; none are larger than 3-4 Angstroms in diameter. The N-terminus of the protein is inside the shell, the C-terminus is outside. The initiator methionine is partially removed. When isolated from culture filtrate isoelectric focusing gives 3 bands, none of which are glycosylated.

It is found in the encapsulin nanocompartment. It localises to the secreted. The protein localises to the cell membrane. Functionally, shell component of a type 1 encapsulin nanocompartment in situ; its cargo protects against oxidative stress at low pH. In situ and in E.coli assembles into proteinaceous shells about 22 nm in diameter with 2.5 nm thick walls. Cargo proteins are targeted to the interior via their C-terminal extensions; empty intact shells can be isolated in E.coli in the absence of cargo protein. There are at least 4 possible cargo proteins, DyP (encoded in the same locus), FolB, BfrB and Rv1762c; DyP and Rv1762c have been identified in vivo. Probably involved in protection against oxidative damage from the host immune response. A T-cell antigen found in bacterial culture cell filtrates, stimulates mouse immune response. Does not have detectable bacteriocin activity. The polypeptide is Type 1 encapsulin shell protein (Mycobacterium tuberculosis (strain ATCC 25618 / H37Rv)).